The sequence spans 248 residues: tRNA pseudouridine synthase A 2 (248 aa).

The active-site Nucleophile is the D55. Y113 lines the substrate pocket.

This sequence belongs to the tRNA pseudouridine synthase TruA family. In terms of assembly, homodimer.

The catalysed reaction is uridine(38/39/40) in tRNA = pseudouridine(38/39/40) in tRNA. Formation of pseudouridine at positions 38, 39 and 40 in the anticodon stem and loop of transfer RNAs. In Clostridium tetani (strain Massachusetts / E88), this protein is tRNA pseudouridine synthase A 2.